The chain runs to 265 residues: Homeobox protein engrailed-2-A (265 aa).

2 stretches are compositionally biased toward basic and acidic residues: residues 1–12 (MEENEQNNREVE) and 102–115 (GEKKSDLAMEETLK). 3 disordered regions span residues 1–38 (MEENEQNNREVEPQQESGEESNRGILHQAPPGNHQPHH), 75–140 (LSGA…KATQ), and 156–181 (DRPSSGPRSRKPKKKSVSKEDKRPRT). Over residues 122 to 136 (DHSLSSDSDSSQTSS) the composition is skewed to low complexity. Residues 176–235 (DKRPRTAFTADQLQRLKAEFQTNRYLTEQRRQSLAQELSLNESQIKIWFQNKRAKIKKAT) constitute a DNA-binding region (homeobox).

This sequence belongs to the engrailed homeobox family.

The protein localises to the nucleus. The chain is Homeobox protein engrailed-2-A (en2-a) from Xenopus laevis (African clawed frog).